A 138-amino-acid chain; its full sequence is Nanos homolog 2 (138 aa).

Positions Glu31–Ala55 are disordered. The Nanos-type zinc finger occupies Leu62–Leu116. Residues Cys63, Cys66, His79, Cys90, Cys98, Cys101, His109, and Cys114 each contribute to the Zn(2+) site. 2 consecutive short sequence motifs (C2HC) follow at residues Cys63–Cys90 and Cys98–Cys114.

It belongs to the nanos family. In terms of assembly, interacts with CNOT1, CNOT3, CNOT6L, CNOT7 and CNOT9. In terms of tissue distribution, testis and ovary. Expression found in several spermatogenic stages: in cells on the periphery of the tubules which could correspond to spermatogonia, in spermatocytes and in round spermatids (at protein level).

It is found in the cytoplasm. The protein resides in the P-body. It localises to the perinuclear region. Its function is as follows. Plays a key role in the sexual differentiation of germ cells by promoting the male fate but suppressing the female fate. Represses the female fate pathways by suppressing meiosis, which in turn results in the promotion of the male fate. Maintains the suppression of meiosis by preventing STRA8 expression, which is required for premeiotic DNA replication, after CYP26B1 is decreased. Regulates the localization of the CCR4-NOT deadenylation complex to P-bodies and plays a role in recruiting the complex to trigger the degradation of mRNAs involved in meiosis. Required for the maintenance of the spermatogonial stem cell population. Not essential for the assembly of P-bodies but is required for the maintenance of their normal state. The chain is Nanos homolog 2 (NANOS2) from Homo sapiens (Human).